The chain runs to 460 residues: Ammonium transporter Rh type C (460 aa).

At M1–W9 the chain is on the cytoplasmic side. Residues R10–V30 form a helical membrane-spanning segment. Residues R31–Y61 lie on the Extracellular side of the membrane. The N-linked (GlcNAc...) asparagine glycan is linked to N48. A helical transmembrane segment spans residues P62–L82. At Q83–V90 the chain is on the cytoplasmic side. The chain crosses the membrane as a helical span at residues G91–F111. The Extracellular segment spans residues H112–N125. Residues L126 to G145 form a helical membrane-spanning segment. The Cytoplasmic segment spans residues K146–Q151. The helical transmembrane segment at L152–L174 threads the bilayer. Topologically, residues E175–A179 are extracellular. The helical transmembrane segment at G180–L200 threads the bilayer. The Cytoplasmic portion of the chain corresponds to Y201–D219. A helical membrane pass occupies residues L220–V240. Residues S241–A251 are Extracellular-facing. The helical transmembrane segment at I252 to L272 threads the bilayer. Topologically, residues H273–N285 are cytoplasmic. A helical membrane pass occupies residues A286 to G306. A topological domain (extracellular) is located at residue S307. Residues L308–F328 traverse the membrane as a helical segment. Over L329 to C339 the chain is Cytoplasmic. The helical transmembrane segment at G340–A360 threads the bilayer. At S361–A396 the chain is on the extracellular side. The helical transmembrane segment at A397 to L417 threads the bilayer. Over K418–P460 the chain is Cytoplasmic.

This sequence belongs to the ammonium transporter (TC 2.A.49) family. Rh subfamily. In terms of assembly, homotrimer. N-glycosylated.

It localises to the apical cell membrane. It carries out the reaction NH4(+)(in) = NH4(+)(out). The enzyme catalyses methylamine(out) = methylamine(in). The catalysed reaction is CO2(out) = CO2(in). Its function is as follows. Ammonium transporter involved in the maintenance of acid-base homeostasis. Transports ammonium and its related derivative methylammonium across the plasma membrane of epithelial cells likely contributing to renal transepithelial ammonia transport and ammonia metabolism. Postulated to primarily mediate an electroneutral bidirectional transport of NH3 ammonia species according to a mechanism that implies interaction of an NH4(+) ion with acidic residues of the pore entry followed by dissociation of NH4(+) into NH3 and H(+). As a result NH3 transits through the central pore and is protonated on the extracellular side reforming NH4(+). May act as a CO2 channel providing for renal acid secretion. The polypeptide is Ammonium transporter Rh type C (RHCG) (Canis lupus familiaris (Dog)).